A 624-amino-acid polypeptide reads, in one-letter code: E3 ubiquitin-protein ligase RLIM (624 aa).

Residue methionine 1 is modified to N-acetylmethionine. The span at 1–11 (MENSDSNDKGS) shows a compositional bias: basic and acidic residues. Disordered regions lie at residues 1–25 (MENS…QMDR), 72–251 (KEGP…SQTF), 257–276 (NETE…QQIS), 291–363 (TRNA…RGGF), and 424–522 (SDSE…TFDE). The span at 104 to 132 (SVRQTGNTTRSGQRGNQSWRAVSRTNPNS) shows a compositional bias: polar residues. The segment covering 142–153 (NVNRNNGSQNSE) has biased composition (low complexity). Position 164 is a phosphoserine (serine 164). Residues 165 to 188 (GENVENNSQRQVENPRSESTSARP) show a composition bias toward polar residues. Serine 195, serine 228, serine 230, and serine 276 each carry phosphoserine. Over residues 214 to 229 (RSPDHRRTRARAERSR) the composition is skewed to basic and acidic residues. Residues 291–315 (TRNASQGAGSSDTAASGESTGSGQR) are compositionally biased toward polar residues. Positions 329 to 339 (RPGEYRQRDSI) are enriched in basic and acidic residues. Polar residues predominate over residues 340-356 (ASRTRSRSQTPNNTVTY). Residues 445-454 (GRGGSGGGSS) are compositionally biased toward gly residues. Residues 455–507 (SGSSSSSSSSSSSSSSSSSSSSPSSSSGGESSETSSDLFEGSNEGSSSSGSSG) show a composition bias toward low complexity. The RING-type zinc finger occupies 570 to 611 (CSVCITEYTEGNKLRKLPCSHEYHVHCIDRWLSENSTCPICR). The PDZ-binding motif lies at 621 to 624 (ESVV).

Belongs to the RNF12 family. As to quaternary structure, interacts with LIM/homeobox factors such as LHX3. Interacts with LDB1, LDB2 and SIN3A. Interacts with LIMK1. Interacts (via N-terminus) with TERF1. Interacts (via C-terminus) with ESR1. Expressed in many tissues.

Its subcellular location is the nucleus. The catalysed reaction is S-ubiquitinyl-[E2 ubiquitin-conjugating enzyme]-L-cysteine + [acceptor protein]-L-lysine = [E2 ubiquitin-conjugating enzyme]-L-cysteine + N(6)-ubiquitinyl-[acceptor protein]-L-lysine.. It participates in protein modification; protein ubiquitination. In terms of biological role, E3 ubiquitin-protein ligase. Acts as a negative coregulator for LIM homeodomain transcription factors by mediating the ubiquitination and subsequent degradation of LIM cofactors LDB1 and LDB2 and by mediating the recruitment the SIN3a/histone deacetylase corepressor complex. Ubiquitination and degradation of LIM cofactors LDB1 and LDB2 allows DNA-bound LIM homeodomain transcription factors to interact with other protein partners such as RLIM. Plays a role in telomere length-mediated growth suppression by mediating the ubiquitination and degradation of TERF1. By targeting ZFP42 for degradation, acts as an activator of random inactivation of X chromosome in the embryo, a stochastic process in which one X chromosome is inactivated to minimize sex-related dosage differences of X-encoded genes in somatic cells of female placental mammals. The sequence is that of E3 ubiquitin-protein ligase RLIM (RLIM) from Homo sapiens (Human).